The sequence spans 247 residues: tRNA (guanine-N(1)-)-methyltransferase (247 aa).

S-adenosyl-L-methionine-binding positions include Gly-116 and 135 to 140 (IGDYVL).

The protein belongs to the RNA methyltransferase TrmD family. As to quaternary structure, homodimer.

The protein resides in the cytoplasm. The catalysed reaction is guanosine(37) in tRNA + S-adenosyl-L-methionine = N(1)-methylguanosine(37) in tRNA + S-adenosyl-L-homocysteine + H(+). Its function is as follows. Specifically methylates guanosine-37 in various tRNAs. The protein is tRNA (guanine-N(1)-)-methyltransferase of Symbiobacterium thermophilum (strain DSM 24528 / JCM 14929 / IAM 14863 / T).